The following is a 270-amino-acid chain: Zinc finger protein ZAT2 (270 aa).

Polar residues-rich tracts occupy residues 1-28 and 36-48; these read MSNT…YNQN and LTNN…SSSP. The tract at residues 1 to 64 is disordered; it reads MSNTSNSDPN…QPDPDASQIA (64 aa). The C2H2-type 1 zinc-finger motif lies at 65–87; sequence RPCTECGKQFGSLKALFGHMRCH. The tract at residues 95-119 is disordered; sequence INPPSNFKRRINSNAASSSSSWDPS. Residues 106 to 115 show a composition bias toward low complexity; that stretch reads NSNAASSSSS. 2 C2H2-type zinc fingers span residues 148–170 and 211–233; these read FECD…RATH and HRCN…MRCH.

In terms of assembly, interacts (via the EAR motif) with TPL. As to expression, expressed exclusively in pollen.

It is found in the nucleus. Its function is as follows. Mediates the regulation of male germ cell division by DUO1. The chain is Zinc finger protein ZAT2 from Arabidopsis thaliana (Mouse-ear cress).